The chain runs to 469 residues: UDP-N-acetylmuramoylalanine--D-glutamate ligase (469 aa).

125–131 (GTNGKTT) contributes to the ATP binding site.

The protein belongs to the MurCDEF family.

The protein localises to the cytoplasm. It catalyses the reaction UDP-N-acetyl-alpha-D-muramoyl-L-alanine + D-glutamate + ATP = UDP-N-acetyl-alpha-D-muramoyl-L-alanyl-D-glutamate + ADP + phosphate + H(+). It participates in cell wall biogenesis; peptidoglycan biosynthesis. Its function is as follows. Cell wall formation. Catalyzes the addition of glutamate to the nucleotide precursor UDP-N-acetylmuramoyl-L-alanine (UMA). This chain is UDP-N-acetylmuramoylalanine--D-glutamate ligase, found in Prochlorococcus marinus (strain NATL2A).